We begin with the raw amino-acid sequence, 123 residues long: UPF0738 protein BCG9842_B4089 (123 aa).

This sequence belongs to the UPF0738 family.

The polypeptide is UPF0738 protein BCG9842_B4089 (Bacillus cereus (strain G9842)).